The following is a 508-amino-acid chain: Photosystem II CP47 reaction center protein (508 aa).

Helical transmembrane passes span 21 to 36 (SVHI…WAGS), 101 to 115 (IVFS…IWHW), 140 to 156 (GIHL…FGAF), 203 to 218 (IAAG…FHLS), 237 to 252 (VLSS…AFVV), and 457 to 472 (SFAL…HGAR).

It belongs to the PsbB/PsbC family. PsbB subfamily. As to quaternary structure, PSII is composed of 1 copy each of membrane proteins PsbA, PsbB, PsbC, PsbD, PsbE, PsbF, PsbH, PsbI, PsbJ, PsbK, PsbL, PsbM, PsbT, PsbX, PsbY, PsbZ, Psb30/Ycf12, at least 3 peripheral proteins of the oxygen-evolving complex and a large number of cofactors. It forms dimeric complexes. Binds multiple chlorophylls. PSII binds additional chlorophylls, carotenoids and specific lipids. serves as cofactor.

Its subcellular location is the plastid. It is found in the chloroplast thylakoid membrane. One of the components of the core complex of photosystem II (PSII). It binds chlorophyll and helps catalyze the primary light-induced photochemical processes of PSII. PSII is a light-driven water:plastoquinone oxidoreductase, using light energy to abstract electrons from H(2)O, generating O(2) and a proton gradient subsequently used for ATP formation. This chain is Photosystem II CP47 reaction center protein, found in Lemna minor (Common duckweed).